A 729-amino-acid chain; its full sequence is Glycine--tRNA ligase (729 aa).

The transit peptide at 1-33 directs the protein to the mitochondrion; it reads MPCLLPSLLRATRAALPLLSPPRVVAASASQRL. Positions 53–109 constitute a WHEP-TRS domain; that stretch reads LLAPLRLAVRQQGDFVRKLKEDKAPQVDVDRAVAELKARKRVLEAKELALQPKDDIV. An N6-acetyllysine modification is found at K194. E289 is a glycine binding site. ATP contacts are provided by residues 321–323 and 332–333; these read RNE and RV. E340 is a binding site for glycine. A Phosphotyrosine modification is found at Y443. 447–448 is a binding site for ATP; the sequence is EI. At K491 the chain carries N6-acetyllysine. 566 to 568 contacts glycine; that stretch reads EPS. An ATP-binding site is contributed by R573. Residue S690 is modified to Phosphoserine. Residue T726 is modified to Phosphothreonine.

This sequence belongs to the class-II aminoacyl-tRNA synthetase family. As to quaternary structure, homodimer.

It localises to the cytoplasm. The protein localises to the mitochondrion. It is found in the cell projection. Its subcellular location is the axon. The protein resides in the secreted. It localises to the extracellular exosome. The enzyme catalyses tRNA(Gly) + glycine + ATP = glycyl-tRNA(Gly) + AMP + diphosphate. It carries out the reaction 2 ATP + H(+) = P(1),P(4)-bis(5'-adenosyl) tetraphosphate + diphosphate. In terms of biological role, catalyzes the ATP-dependent ligation of glycine to the 3'-end of its cognate tRNA, via the formation of an aminoacyl-adenylate intermediate (Gly-AMP). Also produces diadenosine tetraphosphate (Ap4A), a universal pleiotropic signaling molecule needed for cell regulation pathways, by direct condensation of 2 ATPs. Thereby, may play a special role in Ap4A homeostasis. This is Glycine--tRNA ligase (Gars1) from Mus musculus (Mouse).